Reading from the N-terminus, the 3096-residue chain is Unconventional myosin-XVB (3096 aa).

Disordered stretches follow at residues Met1–Asp330, Arg389–Arg489, Gly508–Asp540, and Ala553–Leu649. The segment covering Ala19–Ala33 has biased composition (low complexity). Residues Pro34–Pro50 show a composition bias toward basic and acidic residues. Residues Arg124 to Pro143 are compositionally biased toward basic residues. 2 stretches are compositionally biased toward basic and acidic residues: residues Asp212–Glu222 and Thr261–Glu288. The segment covering Ala307–Asp330 has biased composition (low complexity). Positions Trp406–Gly416 are enriched in basic and acidic residues. Residues His417–Arg426 show a composition bias toward basic residues. Over residues Gly427 to Arg489 the composition is skewed to basic and acidic residues. Positions Glu720–Asp1394 constitute a Myosin motor domain. Gly818 to Thr825 contributes to the ATP binding site. The segment at Leu1273–Pro1295 is actin-binding. The IQ domain maps to Arg1414–Gln1443. Residues Arg1551 to Trp1702 enclose the MyTH4 1 domain. Disordered regions lie at residues Pro1802–Ser1833, Met1963–Phe2026, and Gln2040–Asp2262. The segment covering Ser1808–Thr1820 has biased composition (pro residues). Residues Met1963–Ser1980 show a composition bias toward low complexity. A compositionally biased stretch (acidic residues) spans Ala2059–Glu2076. A compositionally biased stretch (basic and acidic residues) spans Ala2102 to Ala2116. Residues Gly2159–Pro2170 are compositionally biased toward pro residues. A compositionally biased stretch (basic and acidic residues) spans Arg2176 to Leu2185. Pro residues-rich tracts occupy residues Met2199 to Lys2217 and His2247 to Glu2261. The region spanning Lys2481 to Ala2542 is the SH3 domain. Positions Ser2548–Leu2567 are disordered. Positions Tyr2643–Leu2789 constitute a MyTH4 2 domain. Residues Arg2795–Asn3096 enclose the FERM domain.

The protein belongs to the TRAFAC class myosin-kinesin ATPase superfamily. Myosin family. Detected in brain, stomach and kidney.

Its subcellular location is the cytoplasm. The chain is Unconventional myosin-XVB from Homo sapiens (Human).